A 327-amino-acid polypeptide reads, in one-letter code: tRNA-dihydrouridine(20/20a) synthase (327 aa).

FMN contacts are provided by residues 11 to 13 (PML) and glutamine 63. The active-site Proton donor is cysteine 93. FMN is bound by residues lysine 132, histidine 165, 205 to 207 (NGG), and 227 to 228 (GR).

The protein belongs to the Dus family. DusA subfamily. FMN is required as a cofactor.

It catalyses the reaction 5,6-dihydrouridine(20) in tRNA + NADP(+) = uridine(20) in tRNA + NADPH + H(+). The enzyme catalyses 5,6-dihydrouridine(20) in tRNA + NAD(+) = uridine(20) in tRNA + NADH + H(+). It carries out the reaction 5,6-dihydrouridine(20a) in tRNA + NADP(+) = uridine(20a) in tRNA + NADPH + H(+). The catalysed reaction is 5,6-dihydrouridine(20a) in tRNA + NAD(+) = uridine(20a) in tRNA + NADH + H(+). In terms of biological role, catalyzes the synthesis of 5,6-dihydrouridine (D), a modified base found in the D-loop of most tRNAs, via the reduction of the C5-C6 double bond in target uridines. Specifically modifies U20 and U20a in tRNAs. This is tRNA-dihydrouridine(20/20a) synthase from Vibrio cholerae serotype O1 (strain ATCC 39315 / El Tor Inaba N16961).